A 205-amino-acid polypeptide reads, in one-letter code: Thymidylate kinase (205 aa).

10-17 serves as a coordination point for ATP; that stretch reads GIDGAGKT.

Belongs to the thymidylate kinase family.

It catalyses the reaction dTMP + ATP = dTDP + ADP. Its function is as follows. Phosphorylation of dTMP to form dTDP in both de novo and salvage pathways of dTTP synthesis. This chain is Thymidylate kinase, found in Nitrosospira multiformis (strain ATCC 25196 / NCIMB 11849 / C 71).